Consider the following 192-residue polypeptide: Ribosome maturation factor RimP (192 aa).

Belongs to the RimP family.

The protein localises to the cytoplasm. In terms of biological role, required for maturation of 30S ribosomal subunits. The chain is Ribosome maturation factor RimP from Mycobacterium sp. (strain JLS).